The primary structure comprises 276 residues: Undecaprenyl-diphosphatase (276 aa).

5 consecutive transmembrane segments (helical) span residues 85–105 (MNVV…EKTI), 108–128 (VLFA…AILW), 187–207 (VATE…TLYE), 217–237 (VDSV…AFAC), and 253–273 (FAWY…SGWI).

This sequence belongs to the UppP family.

It localises to the cell inner membrane. It catalyses the reaction di-trans,octa-cis-undecaprenyl diphosphate + H2O = di-trans,octa-cis-undecaprenyl phosphate + phosphate + H(+). Its function is as follows. Catalyzes the dephosphorylation of undecaprenyl diphosphate (UPP). Confers resistance to bacitracin. The polypeptide is Undecaprenyl-diphosphatase (Burkholderia mallei (strain NCTC 10247)).